The chain runs to 418 residues: Methylmalonic aciduria type A protein, mitochondrial (418 aa).

Residues 1–65 constitute a mitochondrion transit peptide; the sequence is MPMLLPHPHQ…LLSDGLKRKL (65 aa). GTP-binding positions include 150 to 158, Asp-292, and 328 to 330; these read GPPGAGKST and SAR.

Belongs to the SIMIBI class G3E GTPase family. ArgK/MeaB subfamily. In terms of assembly, homodimer. Interacts with MMUT (the apoenzyme form); the interaction is GTP dependent. In terms of tissue distribution, widely expressed. Highest expression is observed in liver and skeletal muscle.

The protein resides in the mitochondrion. Its subcellular location is the cytoplasm. The enzyme catalyses GTP + H2O = GDP + phosphate + H(+). GTPase activity is stimulated by MMUT. Its function is as follows. GTPase, binds and hydrolyzes GTP. Involved in intracellular vitamin B12 metabolism, mediates the transport of cobalamin (Cbl) into mitochondria for the final steps of adenosylcobalamin (AdoCbl) synthesis. Functions as a G-protein chaperone that assists AdoCbl cofactor delivery from MMAB to the methylmalonyl-CoA mutase (MMUT). Plays a dual role as both a protectase and a reactivase for MMUT. Protects MMUT from progressive inactivation by oxidation by decreasing the rate of the formation of the oxidized inactive cofactor hydroxocobalamin (OH2Cbl). Additionally acts a reactivase by promoting the replacement of OH2Cbl by the active cofactor AdoCbl, restoring the activity of MMUT in the presence and hydrolysis of GTP. In Homo sapiens (Human), this protein is Methylmalonic aciduria type A protein, mitochondrial.